Here is a 2376-residue protein sequence, read N- to C-terminus: Serine/threonine-protein kinase WNK1 (2376 aa).

Disordered stretches follow at residues 1-78 (MSGG…EHRF) and 93-201 (ELPG…QQDD). 2 stretches are compositionally biased toward low complexity: residues 10–19 (SSPPGSLFLS) and 40–49 (GAAAADAGAG). A phosphoserine mark is found at Ser15 and Ser19. The span at 50–66 (RTEEYRRRRHTMDKDSR) shows a compositional bias: basic and acidic residues. At Thr60 the chain carries Phosphothreonine. Positions 125–158 (TPAVAHVAQQPPAAATPGEPAAAVPAAASAPGSA) are enriched in low complexity. The residue at position 172 (Ser172) is a Phosphoserine. The 259-residue stretch at 219 to 477 (LKFDIEIGRG…IKDLLNHAFF (259 aa)) folds into the Protein kinase domain. Ser229 serves as a coordination point for ATP. Phe281 and Leu297 together coordinate chloride. Residues 299-302 (TELM) and Lys349 each bind ATP. Asp366 acts as the Proton acceptor in catalysis. Leu367 and Leu369 together coordinate chloride. A phosphoserine; by autocatalysis mark is found at Ser376 and Ser380. Residues 486–553 (ELAEEDDGEK…VCEGDHKTMA (68 aa)) form an autoinhibitory domain region. The span at 571-586 (QLVREEQEKRKQEESS) shows a compositional bias: basic and acidic residues. Disordered regions lie at residues 571–641 (QLVR…QLQY), 701–799 (AQPH…PVPT), and 1026–1118 (TTSS…SRPK). 2 stretches are compositionally biased toward low complexity: residues 587–601 (LKQQ…SQAG) and 614–624 (AAATTSASVST). Residues 627–637 (EPEEPEADQHQ) form an interaction with KLHL3 region. Residues 708–752 (PPSSMAQGQSQGQPSSSSLTGIPSSQPVQHSQQQQGVQQTAPSQQ) are compositionally biased toward low complexity. Polar residues predominate over residues 753 to 766 (TVQYSLPQTSAPSE). A compositionally biased stretch (pro residues) spans 1045–1057 (PPEPVPAAPPQPT). Residues 1079-1089 (SDGNENVPSSS) are compositionally biased toward polar residues. Positions 1097–1118 (IKRHYRKSVRSRSRHEKTSRPK) are enriched in basic residues. The RFXV motif 1 signature appears at 1257–1260 (RFIV). Ser1261 is subject to Phosphoserine. 2 disordered regions span residues 1459–1478 (STAA…VSGS) and 1734–1770 (STIP…PPSE). The segment covering 1746–1756 (SKPPSTKPPVL) has biased composition (pro residues). The RFXV motif 2 signature appears at 1853 to 1856 (RFQV). A compositionally biased stretch (basic and acidic residues) spans 1862-1878 (DTQKEGKNKSEDVKSVH). The interval 1862–1942 (DTQKEGKNKS…QPTKVGRFQV (81 aa)) is disordered. Residues 1881-1899 (SSTSESSVLSSSSPESTLV) are compositionally biased toward low complexity. 2 short sequence motifs (RFXV motif) span residues 1939 to 1942 (RFQV) and 1951 to 1954 (RFSV). Residues Ser1972, Ser1996, Ser2005, Ser2006, Ser2021, Ser2023, and Ser2026 each carry the phosphoserine modification. 2 disordered regions span residues 1991–2033 (EKPE…LCSK) and 2110–2239 (AAAP…RKGT). The span at 2116–2128 (GRRRRPTKSKGSK) shows a compositional bias: basic residues. The segment covering 2129 to 2141 (SSRSSSLGNKSPG) has biased composition (low complexity). Composition is skewed to polar residues over residues 2146–2161 (LSGQ…QQTL) and 2169–2193 (ETGQ…SAFT). Residues 2207–2223 (GQGTSSTNTVGGTVSSQ) are compositionally biased toward low complexity. Positions 2224 to 2238 (AAQAQPPTMTSSRKG) are enriched in polar residues. The interval 2235-2255 (SRKGTFTDDLHKLVDNWARDA) is amphipathic alpha-helix. Phosphoserine is present on residues Ser2264, Ser2280, Ser2364, and Ser2366.

Belongs to the protein kinase superfamily. Ser/Thr protein kinase family. WNK subfamily. In terms of assembly, interacts with WNK3. Interacts with WNK4; inhibiting the activity of WNK4. Interacts with SGK1; promoting its activation. Associates with the mTORC2 complex. Interacts with UVRAG. Interacts (via amphipathic alpha-helix region) with EMC2; promoting the ER membrane protein complex assembly. The cofactor is Mg(2+). In terms of processing, autophosphorylated at Ser-376 and Ser-380, promoting its activity. Autophosphorylation at Ser-380 is inhibited by intracellular calcium. Phosphorylation at Thr-60 increases ability to activate SGK1. Post-translationally, ubiquitinated by the BCR(KLHL3) complex, leading to its degradation. Also ubiquitinated by the BCR(KLHL2) complex.

It is found in the cytoplasm. It localises to the nucleus. The protein localises to the cytoskeleton. Its subcellular location is the spindle. It carries out the reaction L-seryl-[protein] + ATP = O-phospho-L-seryl-[protein] + ADP + H(+). The catalysed reaction is L-threonyl-[protein] + ATP = O-phospho-L-threonyl-[protein] + ADP + H(+). Its activity is regulated as follows. Activated in response to hyperosmotic stress: cell shrinkage promotes formation of a membraneless compartment that concentrates WNK1 with its substrates, OXSR1/OSR1 and STK39/SPAK. Activation requires autophosphorylation of Ser-380 and, to a lower extent, Ser-376. Autophosphorylation and subsequent activation is inhibited by increases in intracellular ionic strength: Cl(-) potently inhibits WNK1 kinase activity via direct binding. Also inhibited by K(+) ions. Serine/threonine-protein kinase component of the WNK1-SPAK/OSR1 kinase cascade, which acts as a key regulator of blood pressure and regulatory volume increase by promoting ion influx. WNK1 mediates regulatory volume increase in response to hyperosmotic stress by acting as a molecular crowding sensor, which senses cell shrinkage and mediates formation of a membraneless compartment by undergoing liquid-liquid phase separation. The membraneless compartment concentrates WNK1 with its substrates, OXSR1/OSR1 and STK39/SPAK, promoting WNK1-dependent phosphorylation and activation of downstream kinases OXSR1/OSR1 and STK39/SPAK. Following activation, OXSR1/OSR1 and STK39/SPAK catalyze phosphorylation of ion cotransporters SLC12A1/NKCC2, SLC12A2/NKCC1, SLC12A5/KCC2 and SLC12A6/KCC3, regulating their activity. Phosphorylation of Na-K-Cl cotransporters SLC12A2/NKCC1 and SLC12A2/NKCC1 promote their activation and ion influx; simultaneously, phosphorylation of K-Cl cotransporters SLC12A5/KCC2 and SLC12A6/KCC3 inhibit their activity, blocking ion efflux. Also acts as a regulator of angiogenesis in endothelial cells via activation of OXSR1/OSR1 and STK39/SPAK: activation of OXSR1/OSR1 regulates chemotaxis and invasion, while STK39/SPAK regulates endothelial cell proliferation. Also acts independently of the WNK1-SPAK/OSR1 kinase cascade by catalyzing phosphorylation of other substrates, such as SYT2, PCF11 and NEDD4L. Mediates phosphorylation of SYT2, regulating SYT2 association with phospholipids and membrane-binding. Regulates mRNA export in the nucleus by mediating phosphorylation of PCF11, thereby decreasing the association between PCF11 and POLR2A/RNA polymerase II and promoting mRNA export to the cytoplasm. Acts as a negative regulator of autophagy. Required for the abscission step during mitosis, independently of the WNK1-SPAK/OSR1 kinase cascade. May also play a role in actin cytoskeletal reorganization. Also acts as a scaffold protein independently of its protein kinase activity: negatively regulates cell membrane localization of various transporters and channels, such as SLC4A4, SLC26A6, SLC26A9, TRPV4 and CFTR. Involved in the regulation of epithelial Na(+) channel (ENaC) by promoting activation of SGK1 in a kinase-independent manner: probably acts as a scaffold protein that promotes the recruitment of SGK1 to the mTORC2 complex in response to chloride, leading to mTORC2-dependent phosphorylation and activation of SGK1. Acts as an assembly factor for the ER membrane protein complex independently of its protein kinase activity: associates with EMC2 in the cytoplasm via its amphipathic alpha-helix, and prevents EMC2 ubiquitination and subsequent degradation, thereby promoting EMC2 stabilization. This is Serine/threonine-protein kinase WNK1 from Sus scrofa (Pig).